We begin with the raw amino-acid sequence, 314 residues long: MRARPLTLLTALAAVTLVVVAGCEARVEAEAYSAADRISSRPQARPQPQPVELLLRAITPPRAPAASPNVGFGELPTRVRQATDEAAAMGATLSVAVLDRATGQLVSNGNTQIIATASVAKLFIADDLLLAEAEGKVTLSPEDHHALDVMLQSSDDGAAERFWSQDGGNAVVTQVARRYGLRSTAPPSDGRWWNTISSAPDLIRYYDMLLDGSGGLPLDRAAVIIADLAQSTPTGIDGYPQRFGIPDGLYAEPVAVKQGWMCCIGSSWMHLSTGVIGPERRYIMVIESLQPADDATARATITQAVRTMFPNGRI.

Residues 1-22 (MRARPLTLLTALAAVTLVVVAG) form the signal peptide. Residue C23 is the site of N-palmitoyl cysteine attachment. C23 carries the S-diacylglycerol cysteine lipid modification.

The protein resides in the cell membrane. The polypeptide is Putative lipoprotein LppW (lppW) (Mycobacterium bovis (strain ATCC BAA-935 / AF2122/97)).